The chain runs to 81 residues: Cytotoxin 2 (81 aa).

The signal sequence occupies residues 1 to 21; the sequence is MKTLLLTLVVVTIVCLDLGYT. 4 disulfide bridges follow: C24–C42, C35–C59, C63–C74, and C75–C80.

The protein belongs to the three-finger toxin family. Short-chain subfamily. Type IA cytotoxin sub-subfamily. In terms of assembly, monomer in solution; Homodimer and oligomer in the presence of negatively charged lipids forming a pore with a size ranging between 20 and 30 Angstroms. In terms of tissue distribution, expressed by the venom gland.

It localises to the secreted. The protein localises to the target cell membrane. Its function is as follows. Basic protein that binds to cell membrane and depolarizes cardiomyocytes. It also shows lytic activities, but 2-fold less important than that of CTX-A4. It binds to the integrin alpha-V/beta-3 (ITGAV/ITGB3) with a moderate affinity. It may interact with sulfatides in the cell membrane which induces pore formation and cell internalization and is responsible for cytotoxicity in cardiomyocytes. It may also target the mitochondrial membrane and induce mitochondrial swelling and fragmentation. The chain is Cytotoxin 2 from Naja atra (Chinese cobra).